A 453-amino-acid chain; its full sequence is HTH-type pyridoxine biosynthesis transcriptional regulator PdxR (453 aa).

An HTH gntR-type domain is found at T15–D83. Positions S43 to D62 form a DNA-binding region, H-T-H motif.

In the C-terminal section; belongs to the class-I pyridoxal-phosphate-dependent aminotransferase family. It depends on pyridoxal 5'-phosphate as a cofactor.

In terms of biological role, may have a regulatory function in pyridoxine biosynthesis. Is said to also have an aminotransferase activity in valine biosynthesis as a double inactivation of ilvE and pdxR results in an auxotrophic requirement for valine. This Corynebacterium glutamicum (strain ATCC 13032 / DSM 20300 / JCM 1318 / BCRC 11384 / CCUG 27702 / LMG 3730 / NBRC 12168 / NCIMB 10025 / NRRL B-2784 / 534) protein is HTH-type pyridoxine biosynthesis transcriptional regulator PdxR (pdxR).